The sequence spans 378 residues: Aminotransferase apf4 (378 aa).

Arginine 88 provides a ligand contact to pyridoxal 5'-phosphate. Lysine 189 carries the N6-(pyridoxal phosphate)lysine modification. Residue glutamate 228 participates in pyridoxal 5'-phosphate binding. Residues 359–378 (ERGHNGQPTADPTRVIEMPE) are disordered.

This sequence belongs to the class-IV pyridoxal-phosphate-dependent aminotransferase family. It depends on pyridoxal 5'-phosphate as a cofactor.

Its pathway is secondary metabolite biosynthesis. Its function is as follows. Aminotransferase; part of the gene cluster that mediates the biosynthesis of the cyclic tetrapeptide apicidin F (APF). The non-ribosomal peptide synthetase apf1 incorporates four different amino acids to produce apicidin F: L-phenylalanine, D-pipecolic acid (D-pip), N-methoxy-L-tryptophan and L-2-aminooctanedioic acid. L-Phenylalanine is the only proteinogenic amino acid directly used by apf1. The 3 other apf1 substrates are non-proteinogenic and have to be modified by other enzymes of the cluster. Lysine is converted to delta-1-pyrroline-5-carboxylate (P5C) which is reduced to L-pipecolic acid (L-pip) by apf3. L-pip is epimerized to D-pip, probably by apf1 activity, prior to incorporation. L-Tryptophan is N-oxidyzed by one of the cytochrome P450 monooxygenases (apf7 or apf8), and further methylated at the hydroxy group by the O-methyltransferase apf6 to yield N-methoxy-L-tryptophan. The synthesis of the fourth apf1 substrate is more complex. The fatty acid synthase apf5 is involved in the synthesis of the octanoic acid backbone of L-2-aminooctanedioic acid by fixing one acetyl-CoA unit and three malonyl-CoA units. Then one of the cytochrome P450 monooxygenases (apf7 or apf8) may oxidize this backbone to 2-oxooctanoic acid. The aminotransferase apf4 is predicted to catalyze the exchange of the keto group with an amino group. The next step would be the oxidation of 2-aminooctanoic acid by one of the cytochrome P450 monooxygenases (apf7 or apf8). The last step is the oxidation of 2-amino-8-hydroxyoctanoic acid to 2-aminooctanedioic acid is catalyzed by the FAD-dependent monooxygenase apf9. The protein is Aminotransferase apf4 of Gibberella fujikuroi (strain CBS 195.34 / IMI 58289 / NRRL A-6831) (Bakanae and foot rot disease fungus).